A 71-amino-acid chain; its full sequence is Small ribosomal subunit protein bS18c (71 aa).

This sequence belongs to the bacterial ribosomal protein bS18 family. Part of the 30S ribosomal subunit.

It localises to the plastid. It is found in the cyanelle. The polypeptide is Small ribosomal subunit protein bS18c (rps18) (Cyanophora paradoxa).